A 184-amino-acid chain; its full sequence is Exosome complex protein LRP1 (184 aa).

Positions 157–184 (DSTDHIRKASSKKSKRLDKVGKKKGGKK) are disordered. The segment covering 164-184 (KASSKKSKRLDKVGKKKGGKK) has biased composition (basic residues).

It belongs to the C1D family. Associates with nuclear form of the RNA exosome complex. Interacts with RRP4, RRP6, RRP45 and RRP46.

It localises to the nucleus. Required for exosome-dependent processing of pre-rRNA and small nucleolar RNA (snRNA) precursors. Involved in processing of 35S pre-rRNA at the A0, A1 and A2 sites. Required for activity of RRP6 in 7S pre-rRNA processing. Also has a role in 3'-processing of U4 and U5 small nuclear RNAs (snRNAs). Acts as a mRNA export factor. Mediates mRNA degradation upon UV irradiation. Maintains genome integrity where it is involved in both non-homologous end joining (NHEJ) and homologous recombination pathway repair of double strand DNA breaks. During NHEJ, required for joining 3'-overhanging ends. Also involved in telomere length regulation and maintenance. The protein is Exosome complex protein LRP1 (LRP1) of Saccharomyces cerevisiae (strain ATCC 204508 / S288c) (Baker's yeast).